We begin with the raw amino-acid sequence, 207 residues long: Lipid A acyltransferase PagP (207 aa).

The signal sequence occupies residues 1-24 (MKFDLTAACTLSATLLVSSGTVFA). Active-site residues include H79, D122, and S123.

This sequence belongs to the lipid A palmitoyltransferase family. In terms of assembly, homodimer.

The protein resides in the cell outer membrane. It catalyses the reaction a lipid A + a 1,2-diacyl-sn-glycero-3-phosphocholine = a hepta-acyl lipid A + a 2-acyl-sn-glycero-3-phosphocholine. The catalysed reaction is a lipid IVA + a 1,2-diacyl-sn-glycero-3-phosphocholine = a lipid IVB + a 2-acyl-sn-glycero-3-phosphocholine. The enzyme catalyses a lipid IIA + a 1,2-diacyl-sn-glycero-3-phosphocholine = a lipid IIB + a 2-acyl-sn-glycero-3-phosphocholine. Its function is as follows. Transfers a fatty acid residue from the sn-1 position of a phospholipid to the N-linked hydroxyfatty acid chain on the proximal unit of lipid A or its precursors. The protein is Lipid A acyltransferase PagP of Photorhabdus laumondii subsp. laumondii (strain DSM 15139 / CIP 105565 / TT01) (Photorhabdus luminescens subsp. laumondii).